The sequence spans 605 residues: Protein phosphatase 1D (605 aa).

Residues 1–101 form an interaction with CHEK1 region; it reads MAGLYSLGVS…CRRRSSVAFF (101 aa). One can recognise a PPM-type phosphatase domain in the interval 8–375; that stretch reads GVSVFSDQGG…DNTSAIVICI (368 aa). Residues 28–90 are disordered; the sequence is VVEPEPTAEE…DAGASPAPSR (63 aa). Phosphoserine occurs at positions 40 and 85. Mn(2+) is bound by residues aspartate 105, glycine 106, aspartate 314, and aspartate 366. The disordered stretch occupies residues 516–591; the sequence is STPGQMKAQE…RRLRGQKKIG (76 aa). Polar residues-rich tracts occupy residues 530-544 and 555-577; these read PPTNFKRTLEESNSG and LSRSSGAQPASLPTTSQRKNSVK. Residues 579–588 are compositionally biased toward basic residues; that stretch reads TMRRRLRGQK.

It belongs to the PP2C family. As to quaternary structure, interacts with CHEK1 and CHEK2; dephosphorylates them. Interacts with MAPK14. Requires Mg(2+) as cofactor. The cofactor is Mn(2+). In terms of tissue distribution, expressed in fetal and adult brain. Also detected in fetal liver and skeletal muscle, but not in their adult counterparts.

The protein resides in the nucleus. It localises to the cytoplasm. The protein localises to the cytosol. It catalyses the reaction O-phospho-L-seryl-[protein] + H2O = L-seryl-[protein] + phosphate. It carries out the reaction O-phospho-L-threonyl-[protein] + H2O = L-threonyl-[protein] + phosphate. In terms of biological role, involved in the negative regulation of p53 expression. Required for the relief of p53-dependent checkpoint mediated cell cycle arrest. Binds to and dephosphorylates 'Ser-15' of TP53 and 'Ser-345' of CHEK1 which contributes to the functional inactivation of these proteins. Mediates MAPK14 dephosphorylation and inactivation. Is also an important regulator of global heterochromatin silencing and critical in maintaining genome integrity. This Homo sapiens (Human) protein is Protein phosphatase 1D (PPM1D).